The chain runs to 653 residues: Amyloid beta A4 precursor protein-binding family B member 1-interacting protein (653 aa).

The disordered stretch occupies residues 82–141; the sequence is NNKSTAPFPPADASNSYHFHPPPMPSIITEDLSLLPPPPEFDPHYPPPPPDPLTEPKTQE. Over residues 116–134 the composition is skewed to pro residues; that stretch reads LPPPPEFDPHYPPPPPDPL. In terms of domain architecture, Ras-associating spans 165 to 253; that stretch reads KKRIVKVHMI…IHFLEKNEKY (89 aa). Residues 295–404 form the PH domain; it reads VPELEAALYL…WVTGIRIAKY (110 aa). Basic and acidic residues predominate over residues 462 to 481; sequence KHGEANKQEKKSSEVNKPET. Positions 462 to 653 are disordered; it reads KHGEANKQEK…ALQKKREPPT (192 aa). Positions 585–604 are enriched in pro residues; the sequence is PAPPPPPPPPAPAANVPPLP. A compositionally biased stretch (basic residues) spans 605-614; the sequence is VKKHPPKPPK.

It belongs to the MRL family.

The protein resides in the cell membrane. Its subcellular location is the cytoplasm. The protein localises to the cytoskeleton. Its function is as follows. Appears to function in the signal transduction from Ras activation to actin cytoskeletal remodeling. The sequence is that of Amyloid beta A4 precursor protein-binding family B member 1-interacting protein (apbb1ip) from Xenopus laevis (African clawed frog).